The chain runs to 193 residues: Ribonuclease HII (193 aa).

One can recognise an RNase H type-2 domain in the interval cysteine 15–cysteine 193. A divalent metal cation is bound by residues aspartate 21, glutamate 22, and aspartate 112.

This sequence belongs to the RNase HII family. It depends on Mn(2+) as a cofactor. The cofactor is Mg(2+).

It is found in the cytoplasm. The catalysed reaction is Endonucleolytic cleavage to 5'-phosphomonoester.. Endonuclease that specifically degrades the RNA of RNA-DNA hybrids. The polypeptide is Ribonuclease HII (Rickettsia conorii (strain ATCC VR-613 / Malish 7)).